The chain runs to 320 residues: Polycomb complex protein BMI-1-A (320 aa).

An RING-type zinc finger spans residues 18–57 (CVLCGGYFIDATTIIECLHSFCKMCIVRYLETSKYCPICD). A Nuclear localization signal motif is present at residues 81–95 (KLVPGLFKNEMKRRR). Positions 234–320 (ITHPQEGLNN…ALNGSSTSSG (87 aa)) are disordered. Over residues 262–281 (VPSTSSPLPSPSTLVQPSQP) the composition is skewed to low complexity. Residues 285 to 304 (HISSPINGTTMTSPNRQFNF) show a composition bias toward polar residues.

Component of a PRC1-like complex. Homodimer. Interacts with cbx2.

It localises to the nucleus. Component of a Polycomb group (PcG) multiprotein PRC1-like complex, a complex class required to maintain the transcriptionally repressive state of many genes, including Hox genes, throughout development. PcG PRC1 complex acts via chromatin remodeling and modification of histones; it mediates monoubiquitination of histone H2A 'Lys-119', rendering chromatin heritably changed in its expressibility. In the PRC1 complex, it is required to stimulate the E3 ubiquitin-protein ligase activity of rnf2. The protein is Polycomb complex protein BMI-1-A (bmi1a) of Danio rerio (Zebrafish).